A 266-amino-acid chain; its full sequence is Trypsin 5G1 (266 aa).

Positions 1-18 (MTRIILILTATFFACALG) are cleaved as a signal peptide. The propeptide at 19 to 39 (ASTGGSHPLRPWWNALRSSGR) is activation peptide. One can recognise a Peptidase S1 domain in the interval 40 to 265 (IVGGFEVPVE…VRDWVKEVSG (226 aa)). Cys-66 and Cys-82 are disulfide-bonded. Residues His-81 and Asp-125 each act as charge relay system in the active site. 2 cysteine pairs are disulfide-bonded: Cys-190–Cys-206 and Cys-217–Cys-241. Ser-221 acts as the Charge relay system in catalysis.

This sequence belongs to the peptidase S1 family. In terms of tissue distribution, midgut.

It localises to the secreted. Its subcellular location is the extracellular space. The catalysed reaction is Preferential cleavage: Arg-|-Xaa, Lys-|-Xaa.. Its function is as follows. Major function may be to aid in digestion of the blood meal. The chain is Trypsin 5G1 from Aedes aegypti (Yellowfever mosquito).